The chain runs to 140 residues: Profilin-1 (140 aa).

The residue at position 2 (Ala2) is an N-acetylalanine. Ser28 bears the Phosphoserine mark. A Glycyl lysine isopeptide (Lys-Gly) (interchain with G-Cter in SUMO2); alternate cross-link involves residue Lys54. Residue Lys54 forms a Glycyl lysine isopeptide (Lys-Gly) (interchain with G-Cter in ubiquitin); alternate linkage. Ser57 carries the post-translational modification Phosphoserine. Lys108 bears the N6-acetyllysine mark. Tyr129 is subject to Phosphotyrosine. Ser138 carries the phosphoserine; by ROCK1 modification.

Belongs to the profilin family. As to quaternary structure, found in a complex with XPO6, Ran, ACTB and PFN1. Interacts with ACTB. Interacts with VASP. Interacts with HTT. Interacts with SH3BGRL. Occurs in many kinds of cells as a complex with monomeric actin in a 1:1 ratio. Interacts with ACTMAP. In terms of processing, phosphorylation at Ser-138 reduces its affinity for G-actin and blocks its interaction with HTT, reducing its ability to inhibit androgen receptor (AR) and HTT aggregation.

Its subcellular location is the cytoplasm. The protein localises to the cytoskeleton. Functionally, binds to actin and affects the structure of the cytoskeleton. At high concentrations, profilin prevents the polymerization of actin, whereas it enhances it at low concentrations. By binding to PIP2, it inhibits the formation of IP3 and DG. Inhibits androgen receptor (AR) and HTT aggregation and binding of G-actin is essential for its inhibition of AR. The chain is Profilin-1 (Pfn1) from Mus musculus (Mouse).